Here is a 454-residue protein sequence, read N- to C-terminus: Neuronal acetylcholine receptor subunit alpha-5 (454 aa).

The interval 1 to 26 (MPLRARSRKPGAGPAARAPQAGVSEP) is disordered. Positions 1–29 (MPLRARSRKPGAGPAARAPQAGVSEPSFV) are cleaved as a signal peptide. The span at 10–22 (PGAGPAARAPQAG) shows a compositional bias: low complexity. The Extracellular portion of the chain corresponds to 30 to 240 (AKSEDRLFKH…IIRRLPLFYT (211 aa)). N-linked (GlcNAc...) asparagine glycans are attached at residues asparagine 55, asparagine 169, and asparagine 215. Cysteine 156 and cysteine 170 are joined by a disulfide. A disulfide bridge connects residues cysteine 220 and cysteine 221. 3 helical membrane-spanning segments follow: residues 241–261 (LFLIIPCIGLSFLTVLVFYLP), 270–290 (LCTSVLVSLTVFLLVIEEIIP), and 303–323 (LVFTMIFVTLSIVITVFAINI). Over 324–416 (HHRSSSTHNA…KFIAQVLDRM (93 aa)) the chain is Cytoplasmic. The helical transmembrane segment at 417–437 (FLWAFLLVSIIGSLVLFIPVI) threads the bilayer. Residues 438-454 (HKWASIIVPVHIGSTNT) lie on the Extracellular side of the membrane.

Belongs to the ligand-gated ion channel (TC 1.A.9) family. Acetylcholine receptor (TC 1.A.9.1) subfamily. Alpha-5/CHRNA5 sub-subfamily. Neuronal AChR that forms heteropentamers composed of two different type of subunits: alpha and non-alpha (beta). CHRNA5/alpha-5 subunit is only able to form functional nAChRs when co-assembled with another alpha subunit, can be combined to CHRNA4/alpha-4 or CHRNA3/alpha-3 and CHRNB4/beta-4 or CHRNB2/beta-2 to give rise to functional receptors. Interacts with LYPD6.

Its subcellular location is the synaptic cell membrane. It localises to the cell membrane. It carries out the reaction Ca(2+)(in) = Ca(2+)(out). The enzyme catalyses K(+)(in) = K(+)(out). It catalyses the reaction Na(+)(in) = Na(+)(out). Activated by a myriad of ligands such as acetylcholine, cytisine, nicotine, choline and epibatidine. In terms of biological role, component of neuronal acetylcholine receptors (nAChRs) that function as pentameric, ligand-gated cation channels with high calcium permeability among other activities. nAChRs are excitatory neurotrasnmitter receptors formed by a collection of nAChR subunits known to mediate synaptic transmission in the nervous system and the neuromuscular junction. Each nAchR subunit confers differential attributes to channel properties, including activation, deactivation and desensitization kinetics, pH sensitivity, cation permeability, and binding to allosteric modulators. Has an accessory rather than functional role and is only able to form functional nAChRs when co-assembled with another beta subunit. Participates in pentameric assemblies along with CHRNA3, CHRNA4, CHRNB2 and CHRNB4. Increases receptor sensitivity to acetylcholine and nicotine when associated with CHRNA4 and CHRNB2. Plays a role in nicotine addiction. The chain is Neuronal acetylcholine receptor subunit alpha-5 (CHRNA5) from Gallus gallus (Chicken).